Here is a 471-residue protein sequence, read N- to C-terminus: Glutamate--tRNA ligase (471 aa).

The short motif at 9–19 (PSPTGYLHVGG) is the 'HIGH' region element. The Zn(2+) site is built by Cys98, Cys100, Cys125, and His127. The short motif at 237–241 (KLSKR) is the 'KMSKS' region element. Residue Lys240 participates in ATP binding.

Belongs to the class-I aminoacyl-tRNA synthetase family. Glutamate--tRNA ligase type 1 subfamily. In terms of assembly, monomer. Zn(2+) serves as cofactor.

It is found in the cytoplasm. It carries out the reaction tRNA(Glu) + L-glutamate + ATP = L-glutamyl-tRNA(Glu) + AMP + diphosphate. Catalyzes the attachment of glutamate to tRNA(Glu) in a two-step reaction: glutamate is first activated by ATP to form Glu-AMP and then transferred to the acceptor end of tRNA(Glu). In Salmonella enteritidis PT4 (strain P125109), this protein is Glutamate--tRNA ligase.